The following is a 192-amino-acid chain: Ion-translocating oxidoreductase complex subunit A (192 aa).

6 helical membrane passes run 5 to 25, 39 to 59, 72 to 92, 102 to 122, 134 to 154, and 171 to 191; these read ILLL…FLGL, IGMG…AYLV, LRTM…EMVV, LLGI…VALL, IIYG…FASM, and SIAM…TGLV.

Belongs to the NqrDE/RnfAE family. In terms of assembly, the complex is composed of six subunits: RnfA, RnfB, RnfC, RnfD, RnfE and RnfG.

It localises to the cell inner membrane. In terms of biological role, part of a membrane-bound complex that couples electron transfer with translocation of ions across the membrane. The protein is Ion-translocating oxidoreductase complex subunit A of Vibrio vulnificus (strain CMCP6).